We begin with the raw amino-acid sequence, 544 residues long: Zinc finger and SCAN domain-containing protein 25 (544 aa).

Glycyl lysine isopeptide (Lys-Gly) (interchain with G-Cter in SUMO2) cross-links involve residues Lys-3 and Lys-22. An SCAN box domain is found at 42-124 (RLRFRQFRYQ…AMVEDLTERA (83 aa)). A Glycyl lysine isopeptide (Lys-Gly) (interchain with G-Cter in SUMO2) cross-link involves residue Lys-128. A disordered region spans residues 157–189 (VEVKPEWGMPPGEGVQGPDPGTEEQLSQDPGDE). Residues Lys-278 and Lys-285 each participate in a glycyl lysine isopeptide (Lys-Gly) (interchain with G-Cter in SUMO2) cross-link. 6 consecutive C2H2-type zinc fingers follow at residues 348-370 (FQCPECGKGFSRSSNLVRHQRTH), 375-397 (YGCVECGKGFTLREYLMKHQRTH), 403-425 (YVCSECWKTFSQRHHLEVHQRSH), 431-453 (YKCGDCWKSFSRRQHLQVHRRTH), 459-480 (YTCECGKSFSRNANLAVHRRAH), and 486-508 (YGCQVCGKRFSKGERLVRHQRIH). Residues 514-536 (YHCPACGRSFNQRSILNRHQKTQ) form a C2H2-type 7; degenerate zinc finger.

The protein belongs to the krueppel C2H2-type zinc-finger protein family.

The protein localises to the nucleus. Its function is as follows. May be involved in transcriptional regulation. In Homo sapiens (Human), this protein is Zinc finger and SCAN domain-containing protein 25 (ZSCAN25).